A 162-amino-acid polypeptide reads, in one-letter code: Nucleotide-binding protein SAV_4896 (162 aa).

It belongs to the YajQ family.

Nucleotide-binding protein. This is Nucleotide-binding protein SAV_4896 from Streptomyces avermitilis (strain ATCC 31267 / DSM 46492 / JCM 5070 / NBRC 14893 / NCIMB 12804 / NRRL 8165 / MA-4680).